Consider the following 479-residue polypeptide: Aspartyl/glutamyl-tRNA(Asn/Gln) amidotransferase subunit B (479 aa).

It belongs to the GatB/GatE family. GatB subfamily. As to quaternary structure, heterotrimer of A, B and C subunits.

It carries out the reaction L-glutamyl-tRNA(Gln) + L-glutamine + ATP + H2O = L-glutaminyl-tRNA(Gln) + L-glutamate + ADP + phosphate + H(+). The enzyme catalyses L-aspartyl-tRNA(Asn) + L-glutamine + ATP + H2O = L-asparaginyl-tRNA(Asn) + L-glutamate + ADP + phosphate + 2 H(+). Its function is as follows. Allows the formation of correctly charged Asn-tRNA(Asn) or Gln-tRNA(Gln) through the transamidation of misacylated Asp-tRNA(Asn) or Glu-tRNA(Gln) in organisms which lack either or both of asparaginyl-tRNA or glutaminyl-tRNA synthetases. The reaction takes place in the presence of glutamine and ATP through an activated phospho-Asp-tRNA(Asn) or phospho-Glu-tRNA(Gln). The protein is Aspartyl/glutamyl-tRNA(Asn/Gln) amidotransferase subunit B of Streptococcus pyogenes serotype M1.